Here is a 554-residue protein sequence, read N- to C-terminus: Formate--tetrahydrofolate ligase (554 aa).

65-72 serves as a coordination point for ATP; sequence TPAGEGKT.

The protein belongs to the formate--tetrahydrofolate ligase family.

The catalysed reaction is (6S)-5,6,7,8-tetrahydrofolate + formate + ATP = (6R)-10-formyltetrahydrofolate + ADP + phosphate. It participates in one-carbon metabolism; tetrahydrofolate interconversion. This is Formate--tetrahydrofolate ligase from Petrotoga mobilis (strain DSM 10674 / SJ95).